A 201-amino-acid chain; its full sequence is Lipopolysaccharide core heptose(II)-phosphate phosphatase (201 aa).

The first 35 residues, 1–35 (MLAFTLRFIKNKRYLATLAGALVIIAGLTSQHAWS), serve as a signal peptide directing secretion.

Belongs to the phosphoglycerate mutase family. Ais subfamily.

The protein localises to the periplasm. It participates in bacterial outer membrane biogenesis; lipopolysaccharide metabolism. In terms of biological role, catalyzes the dephosphorylation of heptose(II) of the outer membrane lipopolysaccharide core. The chain is Lipopolysaccharide core heptose(II)-phosphate phosphatase from Salmonella newport (strain SL254).